The sequence spans 685 residues: Polyphosphate kinase (685 aa).

N45 lines the ATP pocket. Mg(2+) contacts are provided by R372 and R402. Residues 427-461 (PGLKIHAKLFLISRKEGDDVVRYAHIGTGNFNEKT) enclose the PLD phosphodiesterase 1 domain. The Phosphohistidine intermediate role is filled by H432. ATP contacts are provided by Y465, R561, and H589. The PLD phosphodiesterase 2 domain occupies 584-614 (DRYLEHDRIYIFDNAGDKQVYLSSADWMTRN).

Belongs to the polyphosphate kinase 1 (PPK1) family. Mg(2+) is required as a cofactor. Post-translationally, an intermediate of this reaction is the autophosphorylated ppk in which a phosphate is covalently linked to a histidine residue through a N-P bond.

The enzyme catalyses [phosphate](n) + ATP = [phosphate](n+1) + ADP. Functionally, catalyzes the reversible transfer of the terminal phosphate of ATP to form a long-chain polyphosphate (polyP). The sequence is that of Polyphosphate kinase from Klebsiella pneumoniae.